The primary structure comprises 662 residues: Protein transport Sec1b (662 aa).

The protein belongs to the STXBP/unc-18/SEC1 family.

In terms of biological role, involved in the vesicle trafficking. Binds syntaxins. The chain is Protein transport Sec1b (SEC1B) from Arabidopsis thaliana (Mouse-ear cress).